The primary structure comprises 714 residues: Palmitoyltransferase ZDHHC5 (714 aa).

The Cytoplasmic segment spans residues 1-13 (MPAESAKRFKPSK). A helical transmembrane segment spans residues 14–34 (YVPVSAAAIFLVGATTLFFAF). Residues 35–52 (TCPGLSLSVSPAVPVYNA) lie on the Extracellular side of the membrane. The helical transmembrane segment at 53–73 (VVFLFVLANFSMATFMDPGVF) threads the bilayer. Residues 74 to 148 (PRAEEDEDKE…NCIGRRNYRY (75 aa)) lie on the Cytoplasmic side of the membrane. Position 91 is a phosphotyrosine (Y91). In terms of domain architecture, DHHC spans 104–154 (KWCATCRFYRPPRCSHCSVCDNCVEEFDHHCPWVNNCIGRRNYRYFFLFLL). C134 acts as the S-palmitoyl cysteine intermediate in catalysis. A helical membrane pass occupies residues 149 to 169 (FFLFLLSLTAHITGVFGFGLL). Topologically, residues 170-191 (YVLYHMEELSGVRTAVTMAVMC) are extracellular. Residues 192-212 (VAGLFFIPVAGLTGFHVVLVA) form a helical membrane-spanning segment. Topologically, residues 213 to 714 (RGRTTNEQVT…VGGTTYEISV (502 aa)) are cytoplasmic. Residue S247 is modified to Phosphoserine. The interval 289 to 714 (GELRRTKSKG…VGGTTYEISV (426 aa)) is disordered. T294 is subject to Phosphothreonine. Phosphoserine is present on residues S296 and S299. T303 carries the post-translational modification Phosphothreonine. Position 345 is a phosphoserine (S345). A phosphothreonine mark is found at T348 and T350. Over residues 359-373 (SSSSASAAMPHSSSA) the composition is skewed to low complexity. Phosphoserine is present on residues S380, S398, S406, and S409. Positions 388-398 (AESSRQPSYRS) are enriched in polar residues. Residue T411 is modified to Phosphothreonine. Over residues 422–432 (SSGSRSSSLKS) the composition is skewed to low complexity. Residues S425, S429, and S432 each carry the phosphoserine modification. Position 436 is a phosphothreonine (T436). Positions 445-478 (SIRSEGTTSTSYKSLANQTRNGSLSYDSLLTPSD) are enriched in polar residues. Phosphoserine occurs at positions 529 and 554. Residue R616 is modified to Omega-N-methylarginine. S620 is subject to Phosphoserine. T658 is modified (phosphothreonine). Over residues 667–678 (TAYSKSNGQPKS) the composition is skewed to polar residues. A compositionally biased stretch (pro residues) spans 683–692 (PPGPGQPPLS). Phosphoserine is present on S693. R696 bears the Omega-N-methylarginine mark.

It belongs to the DHHC palmitoyltransferase family. ERF2/ZDHHC9 subfamily. Phosphorylation regulates association with endocytic proteins and its subcellular localization. Phosphorylation by LYN during fatty acid uptake leads to inactivation of the activity. In terms of processing, autopalmitoylated. Palmitoylation of the C-terminal tail regulates stimulation-dependent plasma membrane motility.

It localises to the cell membrane. It carries out the reaction L-cysteinyl-[protein] + hexadecanoyl-CoA = S-hexadecanoyl-L-cysteinyl-[protein] + CoA. Its function is as follows. Palmitoyltransferase that catalyzes the addition of palmitate onto various protein substrates such as CTNND2, CD36, GSDMD, NLRP3, NOD1, NOD2, STAT3 and S1PR1 thus plays a role in various biological processes including cell adhesion, inflammation, fatty acid uptake, bacterial sensing or cardiac functions. Plays an important role in the regulation of synapse efficacy by mediating palmitoylation of delta-catenin/CTNND2, thereby increasing synaptic delivery and surface stabilization of alpha-amino-3-hydroxy-5-methyl-4-isoxazole propionic acid receptors (AMPARs). Under basal conditions, remains at the synaptic membrane through FYN-mediated phosphorylation that prevents association with endocytic proteins. Neuronal activity enhances the internalization and trafficking of DHHC5 from spines to dendritic shafts where it palmitoylates delta-catenin/CTNND2. Regulates cell adhesion at the plasma membrane by palmitoylating GOLGA7B and DSG2. Plays a role in innate immune response by mediating the palmitoylation of NOD1 and NOD2 and their proper recruitment to the bacterial entry site and phagosomes. Also participates in fatty acid uptake by palmitoylating CD36 and thereby targeting it to the plasma membrane. Upon binding of fatty acids to CD36, gets phosphorylated by LYN leading to inactivation and subsequent CD36 caveolar endocytosis. Controls oligodendrocyte development by catalyzing STAT3 palmitoylation. Acts as a regulator of inflammatory response by mediating palmitoylation of NLRP3 and GSDMD. Palmitoylates NLRP3 to promote inflammasome assembly and activation. Activates pyroptosis by catalyzing palmitoylation of gasdermin-D (GSDMD), thereby promoting membrane translocation and pore formation of GSDMD. In Bos taurus (Bovine), this protein is Palmitoyltransferase ZDHHC5 (ZDHHC5).